The sequence spans 128 residues: Gastrotropin (128 aa).

Ala-2 carries the post-translational modification N-acetylalanine.

The protein belongs to the calycin superfamily. Fatty-acid binding protein (FABP) family. As to expression, predominantly expressed in ileum; also expressed in ovary.

It is found in the cytoplasm. Its subcellular location is the membrane. Binds to bile acids and is involved in enterohepatic bile acid metabolism. Required for efficient apical to basolateral transport of conjugated bile acids in ileal enterocytes. Stimulates gastric acid and pepsinogen secretion. This chain is Gastrotropin (Fabp6), found in Rattus norvegicus (Rat).